The primary structure comprises 506 residues: MGSVCMRLWAYLQPFLPCWSQEADKSVVIENPGAYCPPEANRSQGQYFVALFDYEARTAEDLSFHAGDKLQVLDTSHEGWWLARHLEKKGPGLGQQLQGYIPSNYVAEDRSLQAEPWFFGAIKRADAEKQLLYSENQTGAFLIRESESQKGDFSLSVLDEGVVKHYRIRRLDEGGFFLTRRKTFSTLNEFVNYYTTTSDGLCVKLEKPCLKIQVPTPFDLSYKTVDQWEIDRNSIQLLKRLGSGQFGEVWEGLWNNTTPVAVKTLKPGSMDPNDFLREAQIMKSLRHPKLIQLYAVCTLEDPIYIITELMRHGSLQEYLQNDGGSKIRLTQQVDMAAQVASGMAYLESQNYIHRDLAARNVLVGEHNIYKVADFGLARVFKVDNEDIYESKHEIKLPVKWTAPEAIRTNKFSIKSDVWSFGILLYEIITYGKMPYSGMTGAQVIHMLGQNYRLPQPSNCPEQFYSIMMECWNVEPKQRPTFETLHWKLEDYFEPDSSYSDTNNFIN.

The 69-residue stretch at 43–111 folds into the SH3 domain; the sequence is SQGQYFVALF…PSNYVAEDRS (69 aa). In terms of domain architecture, SH2 spans 117 to 209; that stretch reads WFFGAIKRAD…GLCVKLEKPC (93 aa). Position 179 is a phosphothreonine (T179). The region spanning 235 to 492 is the Protein kinase domain; it reads IQLLKRLGSG…TLHWKLEDYF (258 aa). Residues 241–249 and K263 contribute to the ATP site; that span reads LGSGQFGEV. The Proton acceptor role is filled by D355. Y388 carries the post-translational modification Phosphotyrosine; by autocatalysis.

Belongs to the protein kinase superfamily. Tyr protein kinase family. SRC subfamily. As to quaternary structure, interacts (via the SH3-domain) with PTEN. Interacts with RB1. Highly expressed in stomach, small intestine and colon. Concentrated in the brush border membranes of epithelial cells, throughout the maturation axis of the adult small intestine.

Its subcellular location is the cytoplasm. The protein localises to the nucleus. It carries out the reaction L-tyrosyl-[protein] + ATP = O-phospho-L-tyrosyl-[protein] + ADP + H(+). Functionally, non-receptor tyrosine-protein kinase that negatively regulates cell proliferation. Positively regulates PTEN protein stability through phosphorylation of PTEN on 'Tyr-336', which in turn prevents its ubiquitination and degradation, possibly by reducing its binding to NEDD4. May function as a tumor suppressor. The sequence is that of Tyrosine-protein kinase FRK (Frk) from Rattus norvegicus (Rat).